Here is a 157-residue protein sequence, read N- to C-terminus: Arginine repressor (157 aa).

Belongs to the ArgR family.

Its subcellular location is the cytoplasm. The protein operates within amino-acid biosynthesis; L-arginine biosynthesis [regulation]. In terms of biological role, regulates arginine biosynthesis genes. This chain is Arginine repressor, found in Bacteroides thetaiotaomicron (strain ATCC 29148 / DSM 2079 / JCM 5827 / CCUG 10774 / NCTC 10582 / VPI-5482 / E50).